Here is a 344-residue protein sequence, read N- to C-terminus: Anthranilate phosphoribosyltransferase (344 aa).

5-phospho-alpha-D-ribose 1-diphosphate-binding positions include glycine 86, 89 to 90, threonine 94, 96 to 99, 114 to 122, and serine 126; these read GD, NIST, and KHGNKSASG. Residue glycine 86 participates in anthranilate binding. Serine 98 is a Mg(2+) binding site. Anthranilate is bound at residue asparagine 117. Arginine 172 contacts anthranilate. Residues aspartate 231 and glutamate 232 each contribute to the Mg(2+) site.

It belongs to the anthranilate phosphoribosyltransferase family. In terms of assembly, homodimer. Mg(2+) serves as cofactor.

The enzyme catalyses N-(5-phospho-beta-D-ribosyl)anthranilate + diphosphate = 5-phospho-alpha-D-ribose 1-diphosphate + anthranilate. It functions in the pathway amino-acid biosynthesis; L-tryptophan biosynthesis; L-tryptophan from chorismate: step 2/5. Its function is as follows. Catalyzes the transfer of the phosphoribosyl group of 5-phosphorylribose-1-pyrophosphate (PRPP) to anthranilate to yield N-(5'-phosphoribosyl)-anthranilate (PRA). This chain is Anthranilate phosphoribosyltransferase, found in Prochlorococcus marinus (strain MIT 9215).